A 975-amino-acid polypeptide reads, in one-letter code: Glycine dehydrogenase (decarboxylating) (975 aa).

Lysine 723 is modified (N6-(pyridoxal phosphate)lysine).

It belongs to the GcvP family. In terms of assembly, the glycine cleavage system is composed of four proteins: P, T, L and H. It depends on pyridoxal 5'-phosphate as a cofactor.

The enzyme catalyses N(6)-[(R)-lipoyl]-L-lysyl-[glycine-cleavage complex H protein] + glycine + H(+) = N(6)-[(R)-S(8)-aminomethyldihydrolipoyl]-L-lysyl-[glycine-cleavage complex H protein] + CO2. The glycine cleavage system catalyzes the degradation of glycine. The P protein binds the alpha-amino group of glycine through its pyridoxal phosphate cofactor; CO(2) is released and the remaining methylamine moiety is then transferred to the lipoamide cofactor of the H protein. The polypeptide is Glycine dehydrogenase (decarboxylating) (Burkholderia multivorans (strain ATCC 17616 / 249)).